The following is a 268-amino-acid chain: MNTTHIPEPHRTEQHTENLQHWRKILDIAPIVSIVFPAIMYFIFTKDSFEDSLFLRFITLLLPFSYSAVQYAVLLHTNWKSHNKPEGILHTTLYYTLNLLFLAFSIISILSITTLPINKWKNDGGPILFSIFLPPLFMSPTYLLSTSCCLVPGQIGFTDTGINILIDILTLLCSVRSLLLILEESEYCYCFAAISSILILIRLLREKHGPSEKSALPTVPWRVSILVLILIFAALIYLFMMWVSIDILSDHFDLLTKARSTPVSEPGQ.

It belongs to the UPF0328 family.

The chain is UPF0328 protein ECU10_1850 from Encephalitozoon cuniculi (strain GB-M1) (Microsporidian parasite).